The following is a 464-amino-acid chain: Trigger factor (464 aa).

A PPIase FKBP-type domain is found at 166–245 (GDFLTIDITA…VKAVKERELP (80 aa)). The interval 426-464 (FVRPGGEEEAPAAEVTEADTAEGEATEVPAEDEKAEAKA) is disordered. Residues 432-455 (EEEAPAAEVTEADTAEGEATEVPA) are compositionally biased toward acidic residues.

This sequence belongs to the FKBP-type PPIase family. Tig subfamily.

It is found in the cytoplasm. It carries out the reaction [protein]-peptidylproline (omega=180) = [protein]-peptidylproline (omega=0). Its function is as follows. Involved in protein export. Acts as a chaperone by maintaining the newly synthesized protein in an open conformation. Functions as a peptidyl-prolyl cis-trans isomerase. This is Trigger factor from Pseudarthrobacter chlorophenolicus (strain ATCC 700700 / DSM 12829 / CIP 107037 / JCM 12360 / KCTC 9906 / NCIMB 13794 / A6) (Arthrobacter chlorophenolicus).